Consider the following 70-residue polypeptide: DNA-directed RNA polymerase subunit omega (70 aa).

Belongs to the RNA polymerase subunit omega family. The RNAP catalytic core consists of 2 alpha, 1 beta, 1 beta' and 1 omega subunit. When a sigma factor is associated with the core the holoenzyme is formed, which can initiate transcription.

The catalysed reaction is RNA(n) + a ribonucleoside 5'-triphosphate = RNA(n+1) + diphosphate. Functionally, promotes RNA polymerase assembly. Latches the N- and C-terminal regions of the beta' subunit thereby facilitating its interaction with the beta and alpha subunits. This Staphylococcus epidermidis (strain ATCC 12228 / FDA PCI 1200) protein is DNA-directed RNA polymerase subunit omega.